The following is a 533-amino-acid chain: WD repeat-containing protein PAC11 (533 aa).

The segment covering 1-19 (MERLKQLEEKRRQLKELRE) has biased composition (basic and acidic residues). A disordered region spans residues 1–36 (MERLKQLEEKRRQLKELRERRKQASLFPGSETMGHH). WD repeat units follow at residues 380–422 (FDEV…YLSL) and 432–475 (NHST…AIIG).

Interacts with NUM1, when DYN1 is present.

The protein resides in the cytoplasm. It is found in the cytoskeleton. Functionally, required for viability in the absence of the kinesin-related CIN8 mitotic motor. May be a dynein intermediate chain. This is WD repeat-containing protein PAC11 (PAC11) from Saccharomyces cerevisiae (strain ATCC 204508 / S288c) (Baker's yeast).